We begin with the raw amino-acid sequence, 156 residues long: Ribosomal RNA large subunit methyltransferase H (156 aa).

S-adenosyl-L-methionine contacts are provided by residues Leu-73, Gly-104, and 123–128 (IGPLTL).

Belongs to the RNA methyltransferase RlmH family. As to quaternary structure, homodimer.

Its subcellular location is the cytoplasm. It catalyses the reaction pseudouridine(1915) in 23S rRNA + S-adenosyl-L-methionine = N(3)-methylpseudouridine(1915) in 23S rRNA + S-adenosyl-L-homocysteine + H(+). Its function is as follows. Specifically methylates the pseudouridine at position 1915 (m3Psi1915) in 23S rRNA. This is Ribosomal RNA large subunit methyltransferase H from Stenotrophomonas maltophilia (strain R551-3).